Reading from the N-terminus, the 154-residue chain is uncharacterized protein (154 aa).

3 helical membrane-spanning segments follow: residues 26 to 48 (VSGW…GVVT), 97 to 119 (IAMF…LIVF), and 132 to 150 (GLYT…YCAW).

The protein localises to the cell membrane. This is an uncharacterized protein from Archaeoglobus fulgidus (strain ATCC 49558 / DSM 4304 / JCM 9628 / NBRC 100126 / VC-16).